The primary structure comprises 389 residues: Shewanella-like protein phosphatase 1 (389 aa).

Residues 1 to 53 (MASLYLNSLLPLPPSHPQKLLEPSSSSLLSTSNGNELALKPIVINGDPPTFVS) constitute a chloroplast transit peptide. 4 residues coordinate Mn(2+): aspartate 64, histidine 66, aspartate 102, and asparagine 137. Histidine 138 functions as the Proton donor in the catalytic mechanism. Residues histidine 242 and histidine 314 each coordinate Mn(2+).

It belongs to the metallophosphoesterase superfamily. SLP family. Mn(2+) is required as a cofactor. As to expression, expressed in rosettes leaves, shoots and flowers (at protein level).

The protein resides in the plastid. Its subcellular location is the chloroplast. Shows phosphatase activity, hydrolyzing the artificial substrate para-nitrophenylphosphate (pNPP) in vitro. In Arabidopsis thaliana (Mouse-ear cress), this protein is Shewanella-like protein phosphatase 1.